Here is a 295-residue protein sequence, read N- to C-terminus: Phosphatidylglycerol--prolipoprotein diacylglyceryl transferase (295 aa).

The next 7 membrane-spanning stretches (helical) occupy residues 17-37 (IKVHWYGIMYLLGFTAAWLLG), 57-77 (LLFYAMLGVVLGGRIGYMLFY), 92-112 (VWDGGMSFHGGLLGVIAACWW), 127-147 (FMAPLVPLGLGFGRIGNFIGA), 196-216 (QLYEALLEGLVMFVVLWAVSA), 222-242 (YLVGGLFALMYGLFRFAVEFV), and 255-275 (WLTRGQILSLPLIAFGLVLLV). Residue Arg140 participates in a 1,2-diacyl-sn-glycero-3-phospho-(1'-sn-glycerol) binding.

This sequence belongs to the Lgt family.

It localises to the cell inner membrane. The enzyme catalyses L-cysteinyl-[prolipoprotein] + a 1,2-diacyl-sn-glycero-3-phospho-(1'-sn-glycerol) = an S-1,2-diacyl-sn-glyceryl-L-cysteinyl-[prolipoprotein] + sn-glycerol 1-phosphate + H(+). It functions in the pathway protein modification; lipoprotein biosynthesis (diacylglyceryl transfer). Catalyzes the transfer of the diacylglyceryl group from phosphatidylglycerol to the sulfhydryl group of the N-terminal cysteine of a prolipoprotein, the first step in the formation of mature lipoproteins. The chain is Phosphatidylglycerol--prolipoprotein diacylglyceryl transferase from Stenotrophomonas maltophilia (strain R551-3).